The primary structure comprises 193 residues: Peptidyl-tRNA hydrolase (193 aa).

Position 14 (tyrosine 14) interacts with tRNA. Histidine 19 serves as the catalytic Proton acceptor. Phenylalanine 64, asparagine 66, and asparagine 112 together coordinate tRNA.

This sequence belongs to the PTH family. Monomer.

The protein resides in the cytoplasm. The enzyme catalyses an N-acyl-L-alpha-aminoacyl-tRNA + H2O = an N-acyl-L-amino acid + a tRNA + H(+). Hydrolyzes ribosome-free peptidyl-tRNAs (with 1 or more amino acids incorporated), which drop off the ribosome during protein synthesis, or as a result of ribosome stalling. In terms of biological role, catalyzes the release of premature peptidyl moieties from peptidyl-tRNA molecules trapped in stalled 50S ribosomal subunits, and thus maintains levels of free tRNAs and 50S ribosomes. The sequence is that of Peptidyl-tRNA hydrolase from Bartonella bacilliformis (strain ATCC 35685 / KC583 / Herrer 020/F12,63).